The sequence spans 151 residues: Small ribosomal subunit protein uS15 (151 aa).

An N6-acetyllysine; alternate modification is found at K27. N6-succinyllysine; alternate is present on K27. Residue K27 forms a Glycyl lysine isopeptide (Lys-Gly) (interchain with G-Cter in ubiquitin) linkage. S30 is subject to Phosphoserine. Residue K34 is modified to N6-succinyllysine. At Y38 the chain carries Phosphotyrosine. K43 participates in a covalent cross-link: Glycyl lysine isopeptide (Lys-Gly) (interchain with G-Cter in SUMO2).

Belongs to the universal ribosomal protein uS15 family. Component of the small ribosomal subunit. Part of the small subunit (SSU) processome, composed of more than 70 proteins and the RNA chaperone small nucleolar RNA (snoRNA) U3. Ubiquitinated at Lys-27 by RNF14 and RNF25 in response to ribosome collisions (ribosome stalling).

It is found in the cytoplasm. Its subcellular location is the nucleus. It localises to the nucleolus. Its function is as follows. Component of the small ribosomal subunit. The ribosome is a large ribonucleoprotein complex responsible for the synthesis of proteins in the cell. Part of the small subunit (SSU) processome, first precursor of the small eukaryotic ribosomal subunit. During the assembly of the SSU processome in the nucleolus, many ribosome biogenesis factors, an RNA chaperone and ribosomal proteins associate with the nascent pre-rRNA and work in concert to generate RNA folding, modifications, rearrangements and cleavage as well as targeted degradation of pre-ribosomal RNA by the RNA exosome. The polypeptide is Small ribosomal subunit protein uS15 (Homo sapiens (Human)).